Reading from the N-terminus, the 347-residue chain is Palmitoyltransferase ZDHHC19 (347 aa).

Transmembrane regions (helical) follow at residues 29–49 (VFAAFNVTLLLFLSGLFFGFP) and 59–79 (WAFPAITGPLFILTFFSLVSL). Residues 112–162 (EWCPKCLFHRPPRTYHCPWCNICVEDFDHHCKWVNNCIGHRNFRLFMLLVL) enclose the DHHC domain. The S-palmitoyl cysteine intermediate role is filled by C142. 2 helical membrane-spanning segments follow: residues 156-176 (LFMLLVLSLCLYSGALLVTCL) and 194-214 (AILVAVPAAGFLIPLFLLLLI). The tract at residues 275 to 347 (IQEKTKPSPP…PTAEPAAGDP (73 aa)) is disordered.

The protein belongs to the DHHC palmitoyltransferase family.

It localises to the golgi apparatus membrane. It is found in the cytoplasm. The protein localises to the perinuclear region. The catalysed reaction is L-cysteinyl-[protein] + hexadecanoyl-CoA = S-hexadecanoyl-L-cysteinyl-[protein] + CoA. In terms of biological role, palmitoyltransferase that mediates palmitoylation oproteins, such as RRAS and SQSTM1. Catalyzes palmitoylation of RRAS, leading to increased cell viability. Acts as a positive regulator of autophagy by mediating palmitoylation of SQSTM1, promoting affinity between SQSTM1 and ATG8 proteins and recruitment of ubiquitinated cargo proteins to autophagosomes. This is Palmitoyltransferase ZDHHC19 (Zdhhc19) from Mus musculus (Mouse).